Reading from the N-terminus, the 253-residue chain is Triosephosphate isomerase (253 aa).

9-11 lines the substrate pocket; it reads NWK. Histidine 94 functions as the Electrophile in the catalytic mechanism. The Proton acceptor role is filled by glutamate 163. Residues glycine 169, serine 209, and 230-231 contribute to the substrate site; that span reads GG.

Belongs to the triosephosphate isomerase family. Homodimer.

It localises to the cytoplasm. It catalyses the reaction D-glyceraldehyde 3-phosphate = dihydroxyacetone phosphate. The protein operates within carbohydrate biosynthesis; gluconeogenesis. It participates in carbohydrate degradation; glycolysis; D-glyceraldehyde 3-phosphate from glycerone phosphate: step 1/1. Involved in the gluconeogenesis. Catalyzes stereospecifically the conversion of dihydroxyacetone phosphate (DHAP) to D-glyceraldehyde-3-phosphate (G3P). This is Triosephosphate isomerase from Dehalococcoides mccartyi (strain CBDB1).